Reading from the N-terminus, the 201-residue chain is Probable nicotinate-nucleotide adenylyltransferase (201 aa).

The protein belongs to the NadD family.

It catalyses the reaction nicotinate beta-D-ribonucleotide + ATP + H(+) = deamido-NAD(+) + diphosphate. The protein operates within cofactor biosynthesis; NAD(+) biosynthesis; deamido-NAD(+) from nicotinate D-ribonucleotide: step 1/1. In terms of biological role, catalyzes the reversible adenylation of nicotinate mononucleotide (NaMN) to nicotinic acid adenine dinucleotide (NaAD). In Bacteroides fragilis (strain YCH46), this protein is Probable nicotinate-nucleotide adenylyltransferase.